The sequence spans 515 residues: SWI/SNF-related matrix-associated actin-dependent regulator of chromatin subfamily D member 1 (515 aa).

Residues 1 to 103 (MAARAGFQSV…SGMDQSRKRP (103 aa)) are disordered. Gly residues predominate over residues 14–23 (GGAGASGGAG). Residues 43–167 (APGQGLYRSP…DQTIMRKRLD (125 aa)) form an interaction with ESR1, NR1H4, NR3C1, PGR and SMARCA4 region. Residues arginine 68 and arginine 88 each carry the asymmetric dimethylarginine modification. A Glycyl lysine isopeptide (Lys-Gly) (interchain with G-Cter in SUMO2) cross-link involves residue lysine 101. The interval 168 to 474 (IQEALKRPIK…TMTDVVGNPE (307 aa)) is interaction with SMARCC1 and SMARCC2. Residues 180–515 (RKLRIFISNT…LEQALGIRNT (336 aa)) are necessary for GR/NR3C1-mediated remodeling and transcription from chromatin; required for GR/NR3C1 interaction with the BRG1/SMARCA4 complex in vivo. Phosphothreonine is present on threonine 203. Lysine 223 carries the N6-acetyllysine modification. In terms of domain architecture, SWIB/MDM2 spans 290–367 (YQPPQFKLDP…PQRLHALLMP (78 aa)). Residues 412-440 (ASQQEIATLDNKIHETIETINQLKTQREF) adopt a coiled-coil conformation.

Belongs to the SMARCD family. In terms of assembly, component of the multiprotein chromatin-remodeling complexes SWI/SNF: SWI/SNF-A (BAF), SWI/SNF-B (PBAF) and related complexes. The canonical complex contains a catalytic subunit (either SMARCA4/BRG1/BAF190A or SMARCA2/BRM/BAF190B), and at least SMARCE1, ACTL6A/BAF53, SMARCC1/BAF155, SMARCC2/BAF170, and SMARCB1/SNF5/BAF47. Other subunits specific to each of the complexes may also be present permitting several possible combinations developmentally and tissue specific. Component of the BAF complex, which includes at least actin (ACTB), ARID1A/BAF250A, ARID1B/BAF250B, SMARCA2/BRM, SMARCA4/BRG1/BAF190A, ACTL6A/BAF53, ACTL6B/BAF53B, SMARCE1/BAF57, SMARCC1/BAF155, SMARCC2/BAF170, SMARCB1/SNF5/INI1, and one or more SMARCD1/BAF60A, SMARCD2/BAF60B, or SMARCD3/BAF60C. In muscle cells, the BAF complex also contains DPF3. Component of neural progenitors-specific chromatin remodeling complex (npBAF complex) composed of at least, ARID1A/BAF250A or ARID1B/BAF250B, SMARCD1/BAF60A, SMARCD3/BAF60C, SMARCA2/BRM/BAF190B, SMARCA4/BRG1/BAF190A, SMARCB1/BAF47, SMARCC1/BAF155, SMARCE1/BAF57, SMARCC2/BAF170, PHF10/BAF45A, ACTL6A/BAF53A and actin. Component of neuron-specific chromatin remodeling complex (nBAF complex) composed of at least, ARID1A/BAF250A or ARID1B/BAF250B, SMARCD1/BAF60A, SMARCD3/BAF60C, SMARCA2/BRM/BAF190B, SMARCA4/BRG1/BAF190A, SMARCB1/BAF47, SMARCC1/BAF155, SMARCE1/BAF57, SMARCC2/BAF170, DPF1/BAF45B, DPF3/BAF45C, ACTL6B/BAF53B and actin. Component of the SWI/SNF-B (PBAF) chromatin remodeling complex, at least composed of SMARCA4/BRG1, SMARCB1/BAF47/SNF5, ACTL6A/BAF53A or ACTL6B/BAF53B, SMARCE1/BAF57, SMARCD1/BAF60A, SMARCD2/BAF60B, perhaps SMARCD3/BAF60C, SMARCC1/BAF155, SMARCC2/BAF170, PBRM1/BAF180, ARID2/BAF200 and actin (ACTB). Component of SWI/SNF (GBAF) subcomplex, which includes at least BICRA or BICRAL (mutually exclusive), BRD9, SS18, SMARCA2/BRM, SMARCA4/BRG1/BAF190A, ACTL6A/BAF53, SMARCC1/BAF155, and SMARCD1/BAF60A. Specifically interacts with the VDR heterodimer complex. Interacts with ESR1, NR3C1, NR1H4, PGR, SMARCA4, SMARCC1 and SMARCC2. Interacts with DPF2. Interacts with DPF3a (isoform 2 of DPF3/BAF45C) and with HDGFL2 in a DPF3a-dependent manner. Interacts with FOS, FOSB isoform 1 and 2, FOSL1 and FOSL2. In terms of tissue distribution, expressed in all tissues tested, including brain, heart, kidney, liver, lung, muscle, pancreas and placenta.

Its subcellular location is the nucleus. Functionally, involved in transcriptional activation and repression of select genes by chromatin remodeling (alteration of DNA-nucleosome topology). Component of SWI/SNF chromatin remodeling complexes that carry out key enzymatic activities, changing chromatin structure by altering DNA-histone contacts within a nucleosome in an ATP-dependent manner. Belongs to the neural progenitors-specific chromatin remodeling complex (npBAF complex) and the neuron-specific chromatin remodeling complex (nBAF complex). During neural development a switch from a stem/progenitor to a postmitotic chromatin remodeling mechanism occurs as neurons exit the cell cycle and become committed to their adult state. The transition from proliferating neural stem/progenitor cells to postmitotic neurons requires a switch in subunit composition of the npBAF and nBAF complexes. As neural progenitors exit mitosis and differentiate into neurons, npBAF complexes which contain ACTL6A/BAF53A and PHF10/BAF45A, are exchanged for homologous alternative ACTL6B/BAF53B and DPF1/BAF45B or DPF3/BAF45C subunits in neuron-specific complexes (nBAF). The npBAF complex is essential for the self-renewal/proliferative capacity of the multipotent neural stem cells. The nBAF complex along with CREST plays a role regulating the activity of genes essential for dendrite growth. Has a strong influence on vitamin D-mediated transcriptional activity from an enhancer vitamin D receptor element (VDRE). May be a link between mammalian SWI-SNF-like chromatin remodeling complexes and the vitamin D receptor (VDR) heterodimer. Mediates critical interactions between nuclear receptors and the BRG1/SMARCA4 chromatin-remodeling complex for transactivation. Interacts with AKIRIN2. The protein is SWI/SNF-related matrix-associated actin-dependent regulator of chromatin subfamily D member 1 of Homo sapiens (Human).